The following is a 113-amino-acid chain: Large ribosomal subunit protein bL19 (113 aa).

This sequence belongs to the bacterial ribosomal protein bL19 family.

Functionally, this protein is located at the 30S-50S ribosomal subunit interface and may play a role in the structure and function of the aminoacyl-tRNA binding site. The chain is Large ribosomal subunit protein bL19 from Mycolicibacterium vanbaalenii (strain DSM 7251 / JCM 13017 / BCRC 16820 / KCTC 9966 / NRRL B-24157 / PYR-1) (Mycobacterium vanbaalenii).